Consider the following 1271-residue polypeptide: Zinc finger transcription factor Trps1 (1271 aa).

Disordered stretches follow at residues 1-76 and 124-155; these read MVRK…DSAS and SPIK…DMSP. Over residues 34 to 49 the composition is skewed to polar residues; the sequence is SKEISTDPMQENSEQS. The span at 54–65 shows a compositional bias: basic and acidic residues; the sequence is HNSDDHSFHDQE. The segment covering 66–76 has biased composition (polar residues); it reads PSSSINKDSAS. Residues 217–242 form a C2H2-type 1; atypical zinc finger; that stretch reads FKCNICGYGYYGNDPTDLIKHFRKYH. The C2H2-type 2; atypical zinc finger occupies 328-353; the sequence is FRCKFCNFTYLAKSATELEQHFLKTH. The tract at residues 353–387 is disordered; sequence HPNKMKMSSDSGKPSEKSTNKSSPIPRSCEPGDLG. The segment at 426–451 adopts a C2H2-type 3; atypical zinc-finger fold; sequence YWCKFCSFSCESSSNSKLLEHHSKQH. The segment at 513 to 543 adopts a C2H2-type 4; atypical zinc-finger fold; it reads YNCQFCDFRYSKSHGPEVILVGPLLRHYQQH. C2H2-type zinc fingers lie at residues 604–627, 656–679, and 682–705; these read HQCD…ENAH, HSCT…RRVH, and YKCR…NSAH. The tract at residues 843 to 877 is disordered; it reads GVTAGASGEKSGQHTPQYPTAGDSKSKDESQSLLR. A GATA-type zinc finger spans residues 886-910; the sequence is CANCLTTKTSLWRKNANGGYVCNAC. Disordered regions lie at residues 938-987, 1031-1064, and 1154-1196; these read RTRK…RENQ, SPQE…YMRP, and LDLA…EKSD. A compositionally biased stretch (basic and acidic residues) spans 972-985; sequence IRSEDHSMEGHQRE. Residues 1031–1049 show a composition bias toward low complexity; that stretch reads SPQESSGEPGNSSSVSDGK. Composition is skewed to basic and acidic residues over residues 1050–1062 and 1170–1196; these read GSSE…EKYM and DSKE…EKSD. The segment at 1153-1271 is transcriptional repressor domain; sequence PLDLAMKHSR…QAEKNGKNKD (119 aa). Glycyl lysine isopeptide (Lys-Gly) (interchain with G-Cter in SUMO) cross-links involve residues Lys-1182 and Lys-1191. C2H2-type zinc fingers lie at residues 1205 to 1227 and 1233 to 1257; these read TKCV…MSCH and FQCS…RGLH.

In terms of assembly, binds specifically to GATA sequences. Post-translationally, sumoylated. Sumoylation in the repressor domain inhibits the transcription repression activity. Sumoylation on Lys-1191 is the major site. Appears to be sumoylated on multiple sites.

It is found in the nucleus. Transcriptional repressor. Represses expression of GATA-regulated genes at selected sites and stages in vertebrate development. This chain is Zinc finger transcription factor Trps1 (trps1), found in Xenopus laevis (African clawed frog).